The sequence spans 502 residues: Serine/threonine-protein kinase SKS1 (502 aa).

The Protein kinase domain occupies 10–338 (FRITAQIGSG…SEVSSLTSFT (329 aa)). ATP is bound by residues 16–24 (IGSGAYGLV) and K39. D186 serves as the catalytic Proton acceptor. Low complexity-rich tracts occupy residues 376 to 391 (QEQQQQQQQQQQQVQE) and 399 to 410 (EQIQNQEQAQQQ). Positions 376–439 (QEQQQQQQQQ…GSMEKYEYTN (64 aa)) are disordered. Acidic residues predominate over residues 411–420 (QEEEDAEPES).

Belongs to the protein kinase superfamily. Ser/Thr protein kinase family.

It catalyses the reaction L-seryl-[protein] + ATP = O-phospho-L-seryl-[protein] + ADP + H(+). It carries out the reaction L-threonyl-[protein] + ATP = O-phospho-L-threonyl-[protein] + ADP + H(+). Its function is as follows. May have a role in glucose regulation. The chain is Serine/threonine-protein kinase SKS1 (SKS1) from Saccharomyces cerevisiae (strain ATCC 204508 / S288c) (Baker's yeast).